We begin with the raw amino-acid sequence, 239 residues long: MEGLPCPCPALPHFWQLRSHLMAEGSRTQAPGKGPPLSIQFLRAQYEGLKRQQRTQAHLLVLPKGGNTPAPAESMVNAVWINKERRSSLSLEEADSEVEGRLEEAAQGCLQAPKSPWHTHLEMHCLVQTSPQDTSHQVHHRGKLVGSDQRLPPEGDTHLFETNQMTQQGTGIPEAAQLPCQVGNTQTKAVESGLKFSTQCPLSIKNPHRSGKPAYYPFPQRKTPRISQAARNLGLYGSA.

This is an uncharacterized protein from Homo sapiens (Human).